A 287-amino-acid chain; its full sequence is Acetyl-coenzyme A carboxylase carboxyl transferase subunit beta (287 aa).

Residues 36-287 form the CoA carboxyltransferase N-terminal domain; it reads MWVKCDRCGK…KVLYKILELH (252 aa). Residues C40, C43, C59, and C62 each coordinate Zn(2+). The C4-type zinc finger occupies 40–62; it reads CDRCGKTLYKKDLDENLKVCKFC.

The protein belongs to the AccD/PCCB family. As to quaternary structure, acetyl-CoA carboxylase is a heterohexamer composed of biotin carboxyl carrier protein (AccB), biotin carboxylase (AccC) and two subunits each of ACCase subunit alpha (AccA) and ACCase subunit beta (AccD). Zn(2+) is required as a cofactor.

It localises to the cytoplasm. It carries out the reaction N(6)-carboxybiotinyl-L-lysyl-[protein] + acetyl-CoA = N(6)-biotinyl-L-lysyl-[protein] + malonyl-CoA. Its pathway is lipid metabolism; malonyl-CoA biosynthesis; malonyl-CoA from acetyl-CoA: step 1/1. In terms of biological role, component of the acetyl coenzyme A carboxylase (ACC) complex. Biotin carboxylase (BC) catalyzes the carboxylation of biotin on its carrier protein (BCCP) and then the CO(2) group is transferred by the transcarboxylase to acetyl-CoA to form malonyl-CoA. The polypeptide is Acetyl-coenzyme A carboxylase carboxyl transferase subunit beta (Clostridium novyi (strain NT)).